Consider the following 303-residue polypeptide: Protoheme IX farnesyltransferase (303 aa).

A run of 9 helical transmembrane segments spans residues 30–50 (VMSL…STVS), 54–74 (AMIA…LNMW), 101–121 (ALIF…YFAN), 123–143 (ISAV…TIWL), 150–170 (NIVI…TIAT), 178–198 (ITFF…LSLY), 219–241 (STKI…PYAI), 245–262 (GLVF…YNIL), and 279–299 (AKTI…IFLI).

It belongs to the UbiA prenyltransferase family. Protoheme IX farnesyltransferase subfamily.

It is found in the cell inner membrane. The catalysed reaction is heme b + (2E,6E)-farnesyl diphosphate + H2O = Fe(II)-heme o + diphosphate. Its pathway is porphyrin-containing compound metabolism; heme O biosynthesis; heme O from protoheme: step 1/1. Converts heme B (protoheme IX) to heme O by substitution of the vinyl group on carbon 2 of heme B porphyrin ring with a hydroxyethyl farnesyl side group. This Pelagibacter ubique (strain HTCC1062) protein is Protoheme IX farnesyltransferase.